We begin with the raw amino-acid sequence, 459 residues long: tRNA modification GTPase MnmE (459 aa).

3 residues coordinate (6S)-5-formyl-5,6,7,8-tetrahydrofolate: R20, E85, and R124. Residues 221–380 (GLSTVIIGRP…LEMAIQSLFF (160 aa)) form the TrmE-type G domain. Position 231 (N231) interacts with K(+). GTP is bound by residues 231–236 (NVGKSS), 250–256 (TDIPGTT), and 275–278 (DTAG). Residue S235 participates in Mg(2+) binding. T250, I252, and T255 together coordinate K(+). T256 contributes to the Mg(2+) binding site. Residue K459 participates in (6S)-5-formyl-5,6,7,8-tetrahydrofolate binding.

It belongs to the TRAFAC class TrmE-Era-EngA-EngB-Septin-like GTPase superfamily. TrmE GTPase family. As to quaternary structure, homodimer. Heterotetramer of two MnmE and two MnmG subunits. Requires K(+) as cofactor.

Its subcellular location is the cytoplasm. Its function is as follows. Exhibits a very high intrinsic GTPase hydrolysis rate. Involved in the addition of a carboxymethylaminomethyl (cmnm) group at the wobble position (U34) of certain tRNAs, forming tRNA-cmnm(5)s(2)U34. This Bacillus pumilus (strain SAFR-032) protein is tRNA modification GTPase MnmE.